Here is a 382-residue protein sequence, read N- to C-terminus: Transcription factor MYB104 (382 aa).

HTH myb-type domains are found at residues 13-69 and 70-120; these read KKTF…KPSL and KKGP…MRLK. 2 DNA-binding regions (H-T-H motif) span residues 41–65 and 93–116; these read WTHV…MNHL and WSQM…NARR. The interval 326 to 364 is disordered; the sequence is IPKTDTSSESQLFQSSLRSHTDATPDIANTTGYVGSNER. 2 stretches are compositionally biased toward polar residues: residues 329–343 and 352–364; these read TDTS…SSLR and IANT…SNER.

The protein resides in the nucleus. The protein is Transcription factor MYB104 (MYB104) of Arabidopsis thaliana (Mouse-ear cress).